Consider the following 315-residue polypeptide: Methionyl-tRNA formyltransferase (315 aa).

Ser113 to Pro116 is a binding site for (6S)-5,6,7,8-tetrahydrofolate.

Belongs to the Fmt family.

It catalyses the reaction L-methionyl-tRNA(fMet) + (6R)-10-formyltetrahydrofolate = N-formyl-L-methionyl-tRNA(fMet) + (6S)-5,6,7,8-tetrahydrofolate + H(+). Its function is as follows. Attaches a formyl group to the free amino group of methionyl-tRNA(fMet). The formyl group appears to play a dual role in the initiator identity of N-formylmethionyl-tRNA by promoting its recognition by IF2 and preventing the misappropriation of this tRNA by the elongation apparatus. This chain is Methionyl-tRNA formyltransferase, found in Shigella dysenteriae serotype 1 (strain Sd197).